A 108-amino-acid polypeptide reads, in one-letter code: MSHGKVIAVDNPIIYKALTSSGPVVVDFFATWCGPCRAVAPKVGELSEKYSNVRFIQVDVDKVRSVAHEMNIRAMPTFVLYKDGQPLEKRVVGGNVRELEEMIKSISA.

The 108-residue stretch at 1-108 (MSHGKVIAVD…LEEMIKSISA (108 aa)) folds into the Thioredoxin domain. Active-site nucleophile residues include C33 and C36. C33 and C36 are oxidised to a cystine.

Belongs to the thioredoxin family.

Its function is as follows. Participates in various redox reactions through the reversible oxidation of its active center dithiol to a disulfide and catalyzes dithiol-disulfide exchange reactions. The polypeptide is Thioredoxin Asp f 28 (Aspergillus fumigatus (Neosartorya fumigata)).